Reading from the N-terminus, the 555-residue chain is Synaptotagmin-14 (555 aa).

Residues 1–24 (MAIEGGERTCGVHELICIRKVSPE) are Extracellular-facing. A helical; Signal-anchor for type III membrane protein transmembrane segment spans residues 25-47 (AVGFLSAVGVFIILMLLLFLYIN). Topologically, residues 48–555 (KKFCFENVGG…VCRWHALLES (508 aa)) are cytoplasmic. Disordered stretches follow at residues 157-179 (TPPLDELQPPPYQDDSGSPHLSC) and 222-257 (GYEEDVPSDSTAVLSPEDMSAQGSSSQLPKPFDPEP). C2 domains follow at residues 260–379 (KYGT…SLPV) and 415–550 (SVPE…CRWH).

This sequence belongs to the synaptotagmin family. As to quaternary structure, homodimer. Can also form heterodimers. Highly expressed in fetal and adult brain tissue.

The protein localises to the membrane. Its function is as follows. May be involved in the trafficking and exocytosis of secretory vesicles in non-neuronal tissues. Is Ca(2+)-independent. In Homo sapiens (Human), this protein is Synaptotagmin-14 (SYT14).